The chain runs to 60 residues: Large ribosomal subunit protein bL33 (60 aa).

This sequence belongs to the bacterial ribosomal protein bL33 family.

This is Large ribosomal subunit protein bL33 from Flavobacterium johnsoniae (strain ATCC 17061 / DSM 2064 / JCM 8514 / BCRC 14874 / CCUG 350202 / NBRC 14942 / NCIMB 11054 / UW101) (Cytophaga johnsonae).